The chain runs to 602 residues: Elongation factor 4 (602 aa).

Residues 7–189 enclose the tr-type G domain; it reads DKIRNFSIVA…AIVTRLPPPK (183 aa). GTP contacts are provided by residues 19–24 and 136–139; these read DHGKST and NKVD.

Belongs to the TRAFAC class translation factor GTPase superfamily. Classic translation factor GTPase family. LepA subfamily.

The protein localises to the cell inner membrane. It catalyses the reaction GTP + H2O = GDP + phosphate + H(+). Functionally, required for accurate and efficient protein synthesis under certain stress conditions. May act as a fidelity factor of the translation reaction, by catalyzing a one-codon backward translocation of tRNAs on improperly translocated ribosomes. Back-translocation proceeds from a post-translocation (POST) complex to a pre-translocation (PRE) complex, thus giving elongation factor G a second chance to translocate the tRNAs correctly. Binds to ribosomes in a GTP-dependent manner. The protein is Elongation factor 4 of Caulobacter vibrioides (strain NA1000 / CB15N) (Caulobacter crescentus).